A 181-amino-acid polypeptide reads, in one-letter code: MEDIHSGPATNTNPIVFFDIALGGVPLGRIKMELFADVTPRTAENFRRFCTGESKNSQGKPQGYKNSKFHRVIKDFMIQGGDFVNGDGTGSCTIYGTPKFADENFVLKHDRAGVLSMANSGPNTNGCQFFITTTATPFLNGKHVVFGQVVDGMDIVRMIENTRTIRDKPSQDVIITQCGEM.

One can recognise a PPIase cyclophilin-type domain in the interval 17 to 180 (FFDIALGGVP…QDVIITQCGE (164 aa)).

It belongs to the cyclophilin-type PPIase family. PPIase H subfamily.

Its subcellular location is the nucleus. It catalyses the reaction [protein]-peptidylproline (omega=180) = [protein]-peptidylproline (omega=0). Its function is as follows. PPIases accelerate the folding of proteins. It catalyzes the cis-trans isomerization of proline imidic peptide bonds in oligopeptides. The chain is Peptidyl-prolyl cis-trans isomerase H (cyp3) from Aspergillus fumigatus (strain ATCC MYA-4609 / CBS 101355 / FGSC A1100 / Af293) (Neosartorya fumigata).